The primary structure comprises 283 residues: RNase adapter protein RapZ (283 aa).

8–15 is an ATP binding site; it reads GRSGSGKS. Residue 56-59 participates in GTP binding; the sequence is DVRN. The segment at 266–283 is RNA-binding; it reads RSRGKNVQSRHRTLEKRK.

It belongs to the RapZ-like family. RapZ subfamily. In terms of assembly, homotrimer.

In terms of biological role, modulates the synthesis of GlmS, by affecting the processing and stability of the regulatory small RNA GlmZ. When glucosamine-6-phosphate (GlcN6P) concentrations are high in the cell, RapZ binds GlmZ and targets it to cleavage by RNase E. Consequently, GlmZ is inactivated and unable to activate GlmS synthesis. Under low GlcN6P concentrations, RapZ is sequestered and inactivated by an other regulatory small RNA, GlmY, preventing GlmZ degradation and leading to synthesis of GlmS. This is RNase adapter protein RapZ from Photorhabdus laumondii subsp. laumondii (strain DSM 15139 / CIP 105565 / TT01) (Photorhabdus luminescens subsp. laumondii).